Reading from the N-terminus, the 264-residue chain is Cytosolic Fe-S cluster assembly factor Nubp2 homolog (264 aa).

Residue 14–21 (GKGGVGKS) participates in ATP binding. Residues Cys-188 and Cys-191 each contribute to the [4Fe-4S] cluster site.

Belongs to the Mrp/NBP35 ATP-binding proteins family. NUBP2/CFD1 subfamily. Heterotetramer of 2 Nubp1 and 2 Nubp2 chains. The cofactor is [4Fe-4S] cluster.

Its subcellular location is the cytoplasm. Functionally, component of the cytosolic iron-sulfur (Fe/S) protein assembly (CIA) machinery. Required for maturation of extramitochondrial Fe-S proteins. The Nubp1-Nubp2 heterotetramer forms a Fe-S scaffold complex, mediating the de novo assembly of an Fe-S cluster and its transfer to target apoproteins. In Drosophila grimshawi (Hawaiian fruit fly), this protein is Cytosolic Fe-S cluster assembly factor Nubp2 homolog.